A 397-amino-acid chain; its full sequence is Phosphoglycerate kinase (397 aa).

Substrate-binding positions include 26 to 28 (DLN), R42, 65 to 68 (HLGR), R119, and R152. ATP contacts are provided by residues K203, E325, and 351-354 (GGDT).

It belongs to the phosphoglycerate kinase family. Monomer.

The protein resides in the cytoplasm. It catalyses the reaction (2R)-3-phosphoglycerate + ATP = (2R)-3-phospho-glyceroyl phosphate + ADP. The protein operates within carbohydrate degradation; glycolysis; pyruvate from D-glyceraldehyde 3-phosphate: step 2/5. In Bordetella bronchiseptica (strain ATCC BAA-588 / NCTC 13252 / RB50) (Alcaligenes bronchisepticus), this protein is Phosphoglycerate kinase.